The primary structure comprises 434 residues: GTPase Obg (434 aa).

The 158-residue stretch at 1 to 158 (MFIDRAKIYV…RWLYLELKLL (158 aa)) folds into the Obg domain. Residues 159 to 328 (ADVGLLGLPN…LLELMEKYVK (170 aa)) enclose the OBG-type G domain. Residues 165 to 172 (GLPNAGKS), 190 to 194 (FTTKT), 211 to 214 (DIPG), 280 to 283 (NKID), and 309 to 311 (SAK) each bind GTP. Residues Ser172 and Thr192 each coordinate Mg(2+). One can recognise an OCT domain in the interval 347–425 (KQENKKQEIP…IGNYVFKYNS (79 aa)).

This sequence belongs to the TRAFAC class OBG-HflX-like GTPase superfamily. OBG GTPase family. As to quaternary structure, monomer. The cofactor is Mg(2+).

The protein localises to the cytoplasm. In terms of biological role, an essential GTPase which binds GTP, GDP and possibly (p)ppGpp with moderate affinity, with high nucleotide exchange rates and a fairly low GTP hydrolysis rate. Plays a role in control of the cell cycle, stress response, ribosome biogenesis and in those bacteria that undergo differentiation, in morphogenesis control. The protein is GTPase Obg of Dictyoglomus turgidum (strain DSM 6724 / Z-1310).